The following is a 79-amino-acid chain: Small ribosomal subunit protein bS18 (79 aa).

Belongs to the bacterial ribosomal protein bS18 family. In terms of assembly, part of the 30S ribosomal subunit. Forms a tight heterodimer with protein bS6.

Functionally, binds as a heterodimer with protein bS6 to the central domain of the 16S rRNA, where it helps stabilize the platform of the 30S subunit. The sequence is that of Small ribosomal subunit protein bS18 from Streptococcus suis (strain 98HAH33).